Consider the following 208-residue polypeptide: UPF0319 protein VSAL_I2129 (208 aa).

Residues 1 to 21 form the signal peptide; it reads MKFHSFLAAGLCLLTSLSASA.

The protein belongs to the UPF0319 family.

The chain is UPF0319 protein VSAL_I2129 from Aliivibrio salmonicida (strain LFI1238) (Vibrio salmonicida (strain LFI1238)).